We begin with the raw amino-acid sequence, 370 residues long: F-box/kelch-repeat protein At4g38940 (370 aa).

The F-box domain occupies 18–64; that stretch reads PCLISLLPEEIVVDIVARVPRCYYPTLSQVSRRFRSLVASPEIYKRR. Kelch repeat units follow at residues 131–177, 178–230, and 263–315; these read NIFV…LIDR, KIYV…VIGG, and SACV…SYTG.

Part of a SCF (ASK-cullin-F-box) protein ligase complex. Interacts with SKP1A/ASK1, SKP1B/ASK2, ASK11, ASK13 and ASK18.

The protein localises to the nucleus. The protein operates within protein modification; protein ubiquitination. In terms of biological role, component of SCF(ASK-cullin-F-box) E3 ubiquitin ligase complexes, which may mediate the ubiquitination and subsequent proteasomal degradation of target proteins. This chain is F-box/kelch-repeat protein At4g38940, found in Arabidopsis thaliana (Mouse-ear cress).